A 734-amino-acid polypeptide reads, in one-letter code: Photosystem I P700 chlorophyll a apoprotein A2 (734 aa).

8 helical membrane passes run 46–69 (IFASHFGQLAVIFLWTSGNLFHVA), 135–158 (LYTGALFLLALSALFLIAGWLHLQ), 175–199 (LNHHLSGLFGVSSLAWTGHLVHVAI), 273–291 (IAHHHLAIAVVFIIAGHMY), 330–353 (LHFQLGLALAALGVITSLVAQHMY), 369–395 (AALYTHHQYIAGFIMTGAFAHGAIFFI), 417–439 (AIISHLSWASLFLGFHTLGLYVH), and 517–535 (FLVHHAIALGLHTTTSIPV). Residues Cys559 and Cys568 each coordinate [4Fe-4S] cluster. 2 helical membrane-spanning segments follow: residues 575–596 (AFYLSVFWMLNTIGWVTFYWHW) and 643–665 (LSVWAWMFLFGHLVWAIGFMFLI). Residues His654, Met662, and Tyr670 each coordinate chlorophyll a. Trp671 provides a ligand contact to phylloquinone. Residues 707-727 (LVGLAHFSVGYIFTYAAFLIA) form a helical membrane-spanning segment.

It belongs to the PsaA/PsaB family. As to quaternary structure, the PsaA/B heterodimer binds the P700 chlorophyll special pair and subsequent electron acceptors. PSI consists of a core antenna complex that captures photons, and an electron transfer chain that converts photonic excitation into a charge separation. The eukaryotic PSI reaction center is composed of at least 11 subunits. The cofactor is P700 is a chlorophyll a/chlorophyll a' dimer, A0 is one or more chlorophyll a, A1 is one or both phylloquinones and FX is a shared 4Fe-4S iron-sulfur center..

It localises to the plastid. Its subcellular location is the chloroplast thylakoid membrane. It carries out the reaction reduced [plastocyanin] + hnu + oxidized [2Fe-2S]-[ferredoxin] = oxidized [plastocyanin] + reduced [2Fe-2S]-[ferredoxin]. In terms of biological role, psaA and PsaB bind P700, the primary electron donor of photosystem I (PSI), as well as the electron acceptors A0, A1 and FX. PSI is a plastocyanin-ferredoxin oxidoreductase, converting photonic excitation into a charge separation, which transfers an electron from the donor P700 chlorophyll pair to the spectroscopically characterized acceptors A0, A1, FX, FA and FB in turn. Oxidized P700 is reduced on the lumenal side of the thylakoid membrane by plastocyanin. This chain is Photosystem I P700 chlorophyll a apoprotein A2, found in Angiopteris evecta (Mule's foot fern).